A 318-amino-acid polypeptide reads, in one-letter code: MLHLIYISIIVVLIIILISYTHKPKYFRITAPRSVTLFHGIHPLNPKNYKTFSEEFETILNNAIEDGDFKGQLTEPCSYALRGGKYIRPIILMEIVRACQLQHSFGAPIYPAEAALAVEYFHVASLIIDDMPSFDNDVKRRNKDTVWARFGVAKAQMSALALTMQGFQNICRQIDWIKEHCPRFPDPNQLGALLCTFVSHSLNSAGSGQLVDTPEKTIPFFKIAFIMGWVLGTGTIEDIGVIERAAHCFGNAFQLADDIKDHDTDTGGNYAKIHGKRKTFDVVAQSLQECKKILQGKKIYTSIWNEIFQKVINVALGT.

A helical transmembrane segment spans residues 1–21 (MLHLIYISIIVVLIIILISYT). Isopentenyl diphosphate contacts are provided by Lys85, Arg88, and His122. Mg(2+)-binding residues include Asp129 and Asp135. A dimethylallyl diphosphate-binding site is contributed by Arg140. Arg141 contributes to the isopentenyl diphosphate binding site. The dimethylallyl diphosphate site is built by Lys216, Thr217, and Gln254.

It belongs to the FPP/GGPP synthase family. Asfivirus trans-prenyltransferase subfamily. It depends on Mg(2+) as a cofactor.

It is found in the host endoplasmic reticulum. The protein resides in the host membrane. The catalysed reaction is isopentenyl diphosphate + dimethylallyl diphosphate = (2E)-geranyl diphosphate + diphosphate. The enzyme catalyses isopentenyl diphosphate + (2E)-geranyl diphosphate = (2E,6E)-farnesyl diphosphate + diphosphate. It catalyses the reaction isopentenyl diphosphate + (2E,6E)-farnesyl diphosphate = (2E,6E,10E)-geranylgeranyl diphosphate + diphosphate. It carries out the reaction isopentenyl diphosphate + (2E,6E,10E)-geranylgeranyl diphosphate = (2E,6E,10E,14E)-geranylfarnesyl diphosphate + diphosphate. It participates in isoprenoid biosynthesis; farnesyl diphosphate biosynthesis; farnesyl diphosphate from geranyl diphosphate and isopentenyl diphosphate: step 1/1. Its pathway is isoprenoid biosynthesis; geranyl diphosphate biosynthesis; geranyl diphosphate from dimethylallyl diphosphate and isopentenyl diphosphate: step 1/1. It functions in the pathway isoprenoid biosynthesis; geranylgeranyl diphosphate biosynthesis; geranylgeranyl diphosphate from farnesyl diphosphate and isopentenyl diphosphate: step 1/1. In terms of biological role, trans-prenyltransferase that catalyzes the sequential condensation of isopentenyl diphosphate (IPP) with different allylic diphosphates, such as dimethylallyl diphosphate (DMAPP), geranyl diphosphate (GPP), farnesyl diphosphate (FPP) and geranylgeranyl diphosphate (GGPP), farnesyl diphosphate being the best allylic substrate. This African swine fever virus (isolate Tick/Malawi/Lil 20-1/1983) (ASFV) protein is Trans-prenyltransferase.